A 124-amino-acid chain; its full sequence is Fluoride-specific ion channel FluC (124 aa).

4 consecutive transmembrane segments (helical) span residues 6–26 (LLIG…SGIV), 37–57 (LAVN…SLFA), 69–89 (TGFC…FVLV), and 92–112 (GLLF…LIMV). Na(+) is bound by residues Gly73 and Thr76.

This sequence belongs to the fluoride channel Fluc/FEX (TC 1.A.43) family.

The protein localises to the cell membrane. It carries out the reaction fluoride(in) = fluoride(out). Na(+) is not transported, but it plays an essential structural role and its presence is essential for fluoride channel function. Fluoride-specific ion channel. Important for reducing fluoride concentration in the cell, thus reducing its toxicity. This chain is Fluoride-specific ion channel FluC, found in Methanocaldococcus jannaschii (strain ATCC 43067 / DSM 2661 / JAL-1 / JCM 10045 / NBRC 100440) (Methanococcus jannaschii).